We begin with the raw amino-acid sequence, 79 residues long: Cytochrome b (79 aa).

3 consecutive transmembrane segments (helical) span residues 1 to 7 (TALFLAM), 31 to 52 (WLIR…YLHI), and 67 to 79 (WNIG…LTMM). Heme b-binding residues include His37 and His51.

Belongs to the cytochrome b family. The cytochrome bc1 complex contains 3 respiratory subunits (MT-CYB, CYC1 and UQCRFS1), 2 core proteins (UQCRC1 and UQCRC2) and probably 6 low-molecular weight proteins. Heme b is required as a cofactor.

The protein localises to the mitochondrion inner membrane. Component of the ubiquinol-cytochrome c reductase complex (complex III or cytochrome b-c1 complex) that is part of the mitochondrial respiratory chain. The b-c1 complex mediates electron transfer from ubiquinol to cytochrome c. Contributes to the generation of a proton gradient across the mitochondrial membrane that is then used for ATP synthesis. The chain is Cytochrome b (mt-cyb) from Julidochromis regani (Convict julie).